We begin with the raw amino-acid sequence, 128 residues long: Sulfurtransferase TusD (128 aa).

Cys-78 acts as the Cysteine persulfide intermediate in catalysis.

This sequence belongs to the DsrE/TusD family. Heterohexamer, formed by a dimer of trimers. The hexameric TusBCD complex contains 2 copies each of TusB, TusC and TusD. The TusBCD complex interacts with TusE.

It is found in the cytoplasm. Its function is as follows. Part of a sulfur-relay system required for 2-thiolation of 5-methylaminomethyl-2-thiouridine (mnm(5)s(2)U) at tRNA wobble positions. Accepts sulfur from TusA and transfers it in turn to TusE. This Salmonella agona (strain SL483) protein is Sulfurtransferase TusD.